Consider the following 256-residue polypeptide: 2-aminoethanethiol dioxygenase (256 aa).

Fe cation contacts are provided by H100, H102, and H179.

In terms of assembly, monomer. The cofactor is Fe cation. As to expression, ubiquitous, with highest expression in brain, heart and skeletal muscle (at protein level).

The catalysed reaction is cysteamine + O2 = hypotaurine + H(+). The enzyme catalyses N-terminal L-cysteinyl-[protein] + O2 = N-terminal S-hydroxy-S-oxy-L-cysteinyl-[protein] + H(+). Its function is as follows. Plays a vital role in regulating thiol metabolism and preserving oxygen homeostasis by oxidizing the sulfur of cysteamine and N-terminal cysteine-containing proteins to their corresponding sulfinic acids using O2 as a cosubstrate. Catalyzes the oxidation of cysteamine (2-aminoethanethiol) to hypotaurine. Catalyzes the oxidation of the regulator of G-protein signaling 5 (RGS5). Also oxidizes proteins RGS4 and interleukin-32 (IL32). This is 2-aminoethanethiol dioxygenase (Ado) from Mus musculus (Mouse).